The chain runs to 217 residues: Large ribosomal subunit protein uL16 (217 aa).

This sequence belongs to the universal ribosomal protein uL16 family. As to quaternary structure, component of the small ribosomal subunit. Mature ribosomes consist of a small (40S) and a large (60S) subunit. The 40S subunit contains about 33 different proteins and 1 molecule of RNA (18S). The 60S subunit contains about 49 different proteins and 3 molecules of RNA (25S, 5.8S and 5S).

This Dictyostelium discoideum (Social amoeba) protein is Large ribosomal subunit protein uL16 (rpl10).